A 313-amino-acid chain; its full sequence is Putative stilbene synthase 2 (313 aa).

Residue Cys-88 is part of the active site. Substrate is bound by residues Leu-191 and 229–231 (GGP).

This sequence belongs to the thiolase-like superfamily. Chalcone/stilbene synthases family. As to quaternary structure, homodimer.

It localises to the cytoplasm. It catalyses the reaction 4-coumaroyl-CoA + 3 malonyl-CoA + 3 H(+) = trans-resveratrol + 4 CO2 + 4 CoA. It participates in phytoalexin biosynthesis; 3,4',5-trihydroxystilbene biosynthesis; 3,4',5-trihydroxystilbene from trans-4-coumarate: step 2/2. This Arachis hypogaea (Peanut) protein is Putative stilbene synthase 2.